The sequence spans 854 residues: MSSGANITYASRKRRKPVQKTVKPIPAEGIKSNPSKRHRDRLNTELDRLASLLPFPQDVINKLDKLSVLRLSVSYLRAKSFFDVALKSTPADRNGGQDQCRAQIRDWQNLQEGEFLLQALNGFVLVVTADALVFYASSTIQDYLGFQQSDVIHQSVYELIHTEDRAEFQRQLHWALNPSQCTDSAQGVDEAHGPPQAAVYYTPDQLPPENASFMERCFRCRLRCLLDNSSGFLAMNFQGRLKYLHGQNKKGKDGALLPPQLALFAIATPLQPPSILEIRTKNFIFRTKHKLDFTPIGCDAKGQLILGYTEVELCTRGSGYQFIHAADMLHCAESHIRMIKTGESGMTVFRLLAKHSRWRWVQSNARLIYRNGRPDYIIATQRPLTDEEGREHLQKRSMSLPFMFATGEAVLYEISSPFSPIMDPLPIRTKSNTSRKDWAPQSTPSKDSFHPSSLMSALIQQDESIYLCPPSSPAPLDSHFLMGSVSKCGSWQDSFAATGSEAALKHEQIGHAQDVNLALSGGPSELFPDNKNNDLYSIMRDLGIDFEDIRSMQNEEFFRTDSTAAAAGEVDFKDIDITDEILTYVQDSLNNSTLLNSACQQQPVTQHLSCMLQERLQLEQQQQLQQPPPQALEPQQQLCQMVCPQQDLGPKHTQINGTFASWNPTPPVSFNCPQQELKHYQIFSSLQGTAQEFPYKPEVDSVPYTQNFAPCNQPLLPEHSKSVQLDFPGRDFEPSLHPTTSNLDFVSCLQVPENQSHGINSQSAMVSPQAYYAGAMSMYQCQPGPQRTPVDQTQYGSEIPGSQAFLSKVQSRGVFNETYSSDLSSIGHAAQTTGHLHHLAEARPLPDITPGGFL.

Residues 1 to 9 constitute a propeptide that is removed on maturation; it reads MSSGANITY. Residues 1–38 are disordered; the sequence is MSSGANITYASRKRRKPVQKTVKPIPAEGIKSNPSKRH. Short sequence motifs (nuclear localization signal) lie at residues 12-15 and 36-41; these read RKRR and KRHRDR. A bHLH domain is found at 26–79; sequence PAEGIKSNPSKRHRDRLNTELDRLASLLPFPQDVINKLDKLSVLRLSVSYLRAK. The interval 37 to 65 is DNA-binding; that stretch reads RHRDRLNTELDRLASLLPFPQDVINKLDK. Required for maintaining the overall integrity of the AHR:ARNT heterodimer and its transcriptional activity regions lie at residues 49 to 81, 116 to 124, and 264 to 266; these read LASL…AKSF, LLQALNGFV, and FAI. Positions 63–71 match the Nuclear export signal motif; sequence LDKLSVLRL. The PAS 1 domain maps to 111-175; sequence QEGEFLLQAL…AEFQRQLHWA (65 aa). One can recognise a PAS 2 domain in the interval 270-340; it reads LQPPSILEIR…CAESHIRMIK (71 aa). The 42-residue stretch at 346-387 folds into the PAC domain; it reads MTVFRLLAKHSRWRWVQSNARLIYRNGRPDYIIATQRPLTDE. Positions 425-452 are disordered; sequence LPIRTKSNTSRKDWAPQSTPSKDSFHPS. Residues 440–452 are compositionally biased toward polar residues; that stretch reads PQSTPSKDSFHPS.

In terms of assembly, homodimer. Heterodimer; efficient DNA binding requires dimerization with another bHLH protein. Interacts with ARNT; the heterodimer ARNT:AHR binds to core DNA sequence 5'-TGCGTG-3' within the dioxin response element (DRE) of target gene promoters and activates their transcription. Binds MYBBP1A. Interacts with coactivators including SRC-1, RIP140 and NOCA7, and with the corepressor SMRT. Interacts with NEDD8 and IVNS1ABP. Interacts with BMAL1. Interacts with HSP90AB1. Interacts with TIPARP; leading to mono-ADP-ribosylation of AHR and subsequent inhibition of AHR. Mono-ADP-ribosylated, leading to inhibit transcription activator activity of AHR.

Its subcellular location is the cytoplasm. The protein localises to the nucleus. In terms of biological role, ligand-activated transcription factor that enables cells to adapt to changing conditions by sensing compounds from the environment, diet, microbiome and cellular metabolism, and which plays important roles in development, immunity and cancer. Upon ligand binding, translocates into the nucleus, where it heterodimerizes with ARNT and induces transcription by binding to xenobiotic response elements (XRE). Regulates a variety of biological processes, including angiogenesis, hematopoiesis, drug and lipid metabolism, cell motility and immune modulation. Xenobiotics can act as ligands: upon xenobiotic-binding, activates the expression of multiple phase I and II xenobiotic chemical metabolizing enzyme genes (such as the CYP1A1 gene). Mediates biochemical and toxic effects of halogenated aromatic hydrocarbons. Next to xenobiotics, natural ligands derived from plants, microbiota, and endogenous metabolism are potent AHR agonists. Tryptophan (Trp) derivatives constitute an important class of endogenous AHR ligands. Acts as a negative regulator of anti-tumor immunity: indoles and kynurenic acid generated by Trp catabolism act as ligand and activate AHR, thereby promoting AHR-driven cancer cell motility and suppressing adaptive immunity. Regulates the circadian clock by inhibiting the basal and circadian expression of the core circadian component PER1. Inhibits PER1 by repressing the CLOCK-BMAL1 heterodimer mediated transcriptional activation of PER1. The heterodimer ARNT:AHR binds to core DNA sequence 5'-TGCGTG-3' within the dioxin response element (DRE) of target gene promoters and activates their transcription. This chain is Aryl hydrocarbon receptor (Ahr), found in Mus spretus (Western Mediterranean mouse).